A 1001-amino-acid chain; its full sequence is Translation initiation factor IF-2 (1001 aa).

The disordered stretch occupies residues 34 to 404 (KSHSSTISES…SRGDRRDRKE (371 aa)). Residues 67–80 (SRPESKEDKSDPKQ) show a composition bias toward basic and acidic residues. Composition is skewed to pro residues over residues 98 to 107 (PARPTPPPRP), 147 to 157 (PTQPLAPPPVP), and 163 to 172 (PSKPAPPTPP). Residues 173–190 (AKKAAPAPRLAGPPGRTA) show a composition bias toward low complexity. Basic and acidic residues-rich tracts occupy residues 212 to 230 (SLKDNRGQARSPGDREEKV) and 238 to 252 (PKPKVELRRPKPPRP). Acidic residues predominate over residues 332–342 (DDDDDDLDIDG). Low complexity-rich tracts occupy residues 362 to 371 (KSLAAKPSTP) and 385 to 394 (AGSSAGGSSR). Residues 395-404 (SRGDRRDRKE) are compositionally biased toward basic and acidic residues. The region spanning 493 to 666 (RRPPVVTIMG…LLVSEVEELV (174 aa)) is the tr-type G domain. Residues 502–509 (GHVDHGKT) form a G1 region. 502–509 (GHVDHGKT) provides a ligand contact to GTP. The segment at 527–531 (GITQH) is G2. Residues 552–555 (DTPG) form a G3 region. Residues 552–556 (DTPGH) and 606–609 (NKVD) each bind GTP. Positions 606 to 609 (NKVD) are G4. The tract at residues 642-644 (SAL) is G5.

It belongs to the TRAFAC class translation factor GTPase superfamily. Classic translation factor GTPase family. IF-2 subfamily.

It is found in the cytoplasm. Its function is as follows. One of the essential components for the initiation of protein synthesis. Protects formylmethionyl-tRNA from spontaneous hydrolysis and promotes its binding to the 30S ribosomal subunits. Also involved in the hydrolysis of GTP during the formation of the 70S ribosomal complex. This Synechocystis sp. (strain ATCC 27184 / PCC 6803 / Kazusa) protein is Translation initiation factor IF-2 (infB).